Consider the following 91-residue polypeptide: Probable Fe(2+)-trafficking protein (91 aa).

Belongs to the Fe(2+)-trafficking protein family.

Its function is as follows. Could be a mediator in iron transactions between iron acquisition and iron-requiring processes, such as synthesis and/or repair of Fe-S clusters in biosynthetic enzymes. The chain is Probable Fe(2+)-trafficking protein from Paraburkholderia phytofirmans (strain DSM 17436 / LMG 22146 / PsJN) (Burkholderia phytofirmans).